Here is a 458-residue protein sequence, read N- to C-terminus: Type III intermediate filament (458 aa).

Residues 1–100 (MEKGYKMNRS…KVNRTNEKAE (100 aa)) form a head region. Residues 97–405 (EKAEMIELND…KLLEGEENRI (309 aa)) enclose the IF rod domain. The segment at 406-458 (SMPLPSFGSMSLSDAMFEQQPFENRTSKKKIVIKTVETSGGDVISETTQKIED) is tail.

Belongs to the intermediate filament family.

The sequence is that of Type III intermediate filament from Tetronarce californica (Pacific electric ray).